Consider the following 115-residue polypeptide: uncharacterized protein (115 aa).

A helical transmembrane segment spans residues 36 to 56 (SFFSLGLIACFCIFLIIVLSE).

The protein resides in the membrane. This is an uncharacterized protein from Saccharomyces cerevisiae (strain ATCC 204508 / S288c) (Baker's yeast).